The following is a 439-amino-acid chain: uncharacterized protein (439 aa).

The VWFA domain maps to 273-439 (PIIILLDHSG…EARKIYKSIS (167 aa)).

This is an uncharacterized protein from Methanocaldococcus jannaschii (strain ATCC 43067 / DSM 2661 / JAL-1 / JCM 10045 / NBRC 100440) (Methanococcus jannaschii).